A 549-amino-acid polypeptide reads, in one-letter code: Polycomb group RING finger protein 3 homolog mig-32 (549 aa).

The disordered stretch occupies residues 1-263 (MTRKRPALAE…EESMRQKYGQ (263 aa)). The span at 12–29 (VSSSRSRVTRRSTTGAPS) shows a compositional bias: low complexity. Acidic residues-rich tracts occupy residues 38–49 (PESDADSEDDYD) and 87–100 (MDDD…DGEV). Residues 118 to 130 (KTAKLQTKKKKKK) are compositionally biased toward basic residues. Residues 134–144 (PETPPTSPSPS) are compositionally biased toward pro residues. The segment covering 145–156 (PSRSVSPSTTKS) has biased composition (low complexity). The span at 205–235 (EEIKLRERAERKARRIEEAKNRPKLTIEQKL) shows a compositional bias: basic and acidic residues. Residues 206-260 (EIKLRERAERKARRIEEAKNRPKLTIEQKLAKLRKKKERRERRKEQEKEESMRQK) are a coiled coil. The span at 236-247 (AKLRKKKERRER) shows a compositional bias: basic residues. Basic and acidic residues predominate over residues 248–258 (RKEQEKEESMR). The segment at 329–368 (CGICDGYIVDATTIIDCMHTFCKSCLLTYFESDNNTCPTC) adopts an RING-type zinc-finger fold.

Component of a PRC1-like complex.

It localises to the nucleus. The protein resides in the nucleolus. Its function is as follows. Component of a Polycomb group (PcG) multiprotein PRC1-like complex, a complex class required to maintain the transcriptionally repressive state of many genes, throughout development. Required for ubiquitination of histone H2A. Plays a role in the formation of the male-specific genital sensilla (simple sense organs) known as rays. Required for normal migration of the hermaphrodite specific neurons (HSN) and for extension of some neuronal processes. Represses vulval fates in hypodermal cells that do not normally contribute to vulval development. The protein is Polycomb group RING finger protein 3 homolog mig-32 of Caenorhabditis elegans.